Consider the following 236-residue polypeptide: Leucyl/phenylalanyl-tRNA--protein transferase (236 aa).

The protein belongs to the L/F-transferase family.

It localises to the cytoplasm. It catalyses the reaction N-terminal L-lysyl-[protein] + L-leucyl-tRNA(Leu) = N-terminal L-leucyl-L-lysyl-[protein] + tRNA(Leu) + H(+). The catalysed reaction is N-terminal L-arginyl-[protein] + L-leucyl-tRNA(Leu) = N-terminal L-leucyl-L-arginyl-[protein] + tRNA(Leu) + H(+). The enzyme catalyses L-phenylalanyl-tRNA(Phe) + an N-terminal L-alpha-aminoacyl-[protein] = an N-terminal L-phenylalanyl-L-alpha-aminoacyl-[protein] + tRNA(Phe). In terms of biological role, functions in the N-end rule pathway of protein degradation where it conjugates Leu, Phe and, less efficiently, Met from aminoacyl-tRNAs to the N-termini of proteins containing an N-terminal arginine or lysine. The sequence is that of Leucyl/phenylalanyl-tRNA--protein transferase from Idiomarina loihiensis (strain ATCC BAA-735 / DSM 15497 / L2-TR).